The following is a 333-amino-acid chain: Glycerol-3-phosphate dehydrogenase [NAD(P)+] (333 aa).

NADPH contacts are provided by Ser13, Tyr14, Arg34, and Lys108. Residues Lys108, Gly137, and Thr139 each contribute to the sn-glycerol 3-phosphate site. Ala141 provides a ligand contact to NADPH. Residues Lys193, Asp246, Ser256, Arg257, and Asn258 each contribute to the sn-glycerol 3-phosphate site. Catalysis depends on Lys193, which acts as the Proton acceptor. Residue Arg257 coordinates NADPH. Residue Glu283 coordinates NADPH.

Belongs to the NAD-dependent glycerol-3-phosphate dehydrogenase family.

The protein localises to the cytoplasm. The catalysed reaction is sn-glycerol 3-phosphate + NAD(+) = dihydroxyacetone phosphate + NADH + H(+). The enzyme catalyses sn-glycerol 3-phosphate + NADP(+) = dihydroxyacetone phosphate + NADPH + H(+). The protein operates within membrane lipid metabolism; glycerophospholipid metabolism. Functionally, catalyzes the reduction of the glycolytic intermediate dihydroxyacetone phosphate (DHAP) to sn-glycerol 3-phosphate (G3P), the key precursor for phospholipid synthesis. In Idiomarina loihiensis (strain ATCC BAA-735 / DSM 15497 / L2-TR), this protein is Glycerol-3-phosphate dehydrogenase [NAD(P)+].